Here is a 316-residue protein sequence, read N- to C-terminus: MSTVQVPKLNTKDLLTLEELTQEEIISLIEFAIYLKKNKQEPLLQGKILGLIFDKHSTRTRVSFEAGMVQLGGHGMFLNGKEMQMGRGETVSDTAKVLSHYIDGIMIRTFSHADVEELAKESSIPVINGLTDDHHPCQALADLMTIYEETNTFKGIKLAYVGDGNNVCHSLLLASAKVGMHMTVATPIGYEPNEEIVKKALAIAKETGAEIEILHNPELAVNEVDFIYTDVWMSMGQEGEEEKYTVFQPYQINKELVTHAKQTYRFLHCLPAHREEEVTGEIIDGPQSIVFEQAGNRLHAQKALLVSLFKNVEELS.

Carbamoyl phosphate-binding positions include 57–60 (STRT), glutamine 84, arginine 108, and 135–138 (HPCQ). L-ornithine is bound by residues asparagine 166, aspartate 230, and 234–235 (SM). Residues 269 to 270 (CL) and arginine 297 each bind carbamoyl phosphate.

It belongs to the aspartate/ornithine carbamoyltransferase superfamily. OTCase family.

It localises to the cytoplasm. It carries out the reaction carbamoyl phosphate + L-ornithine = L-citrulline + phosphate + H(+). It functions in the pathway amino-acid degradation; L-arginine degradation via ADI pathway; carbamoyl phosphate from L-arginine: step 2/2. In terms of biological role, reversibly catalyzes the transfer of the carbamoyl group from carbamoyl phosphate (CP) to the N(epsilon) atom of ornithine (ORN) to produce L-citrulline. In Bacillus cereus (strain 03BB102), this protein is Ornithine carbamoyltransferase.